The following is a 271-amino-acid chain: NAD kinase (271 aa).

The Proton acceptor role is filled by Asp64. NAD(+)-binding positions include 64 to 65, Arg69, 132 to 133, Lys143, Arg160, Asp162, 173 to 178, Ala197, and Gln231; these read DG, NE, and TAYAMS.

Belongs to the NAD kinase family. A divalent metal cation serves as cofactor.

It is found in the cytoplasm. It catalyses the reaction NAD(+) + ATP = ADP + NADP(+) + H(+). In terms of biological role, involved in the regulation of the intracellular balance of NAD and NADP, and is a key enzyme in the biosynthesis of NADP. Catalyzes specifically the phosphorylation on 2'-hydroxyl of the adenosine moiety of NAD to yield NADP. The protein is NAD kinase of Methanocorpusculum labreanum (strain ATCC 43576 / DSM 4855 / Z).